Here is a 324-residue protein sequence, read N- to C-terminus: Viral cathepsin (324 aa).

A signal peptide spans 1 to 16 (MNKIMLCLLVCGVVHA). Positions 17–113 (ATYDLLKAPN…VILDRPPDRG (97 aa)) are cleaved as a propeptide — activation peptide. 3 disulfide bridges follow: Cys134-Cys175, Cys168-Cys208, and Cys263-Cys311. Cys137 is a catalytic residue. N-linked (GlcNAc...) asparagine; by host glycosylation occurs at Asn159. Catalysis depends on residues His270 and Asn290.

The protein belongs to the peptidase C1 family. Synthesized as an inactive proenzyme and activated by proteolytic removal of the inhibitory propeptide.

It catalyses the reaction Endopeptidase of broad specificity, hydrolyzing substrates of both cathepsin L and cathepsin B.. Cysteine protease that plays an essential role in host liquefaction to facilitate horizontal transmission of the virus. May participate in the degradation of foreign protein expressed by the baculovirus system. This chain is Viral cathepsin (VCATH), found in Orgyia pseudotsugata (Douglas-fir tussock moth).